A 430-amino-acid polypeptide reads, in one-letter code: Tektin-2 (430 aa).

2 coiled-coil regions span residues 81 to 162 and 265 to 379; these read CLTD…FEKL and FRKR…DIAC.

This sequence belongs to the tektin family. As to quaternary structure, microtubule inner protein component of sperm flagellar doublet microtubules. May interact with CCDC172. Post-translationally, tyrosine phosphorylated. Ubiquitinated, leading to its degradation. Deubiquitinated by USP16, promoting its stability. Expressed in trachea multiciliated cells.

The protein localises to the cytoplasm. It is found in the cytoskeleton. The protein resides in the cilium axoneme. Its subcellular location is the flagellum axoneme. It localises to the microtubule organizing center. In terms of biological role, microtubule inner protein (MIP) part of the dynein-decorated doublet microtubules (DMTs) in cilia and flagellar axoneme. Plays a key role in the assembly or attachment of the inner dynein arm to microtubules in sperm flagella and tracheal cilia. Forms filamentous polymers in the walls of ciliary and flagellar microtubules. This is Tektin-2 (TEKT2) from Bos taurus (Bovine).